Reading from the N-terminus, the 210-residue chain is V-type ATP synthase subunit D (210 aa).

Belongs to the V-ATPase D subunit family.

Its function is as follows. Produces ATP from ADP in the presence of a proton gradient across the membrane. This chain is V-type ATP synthase subunit D, found in Coprothermobacter proteolyticus (strain ATCC 35245 / DSM 5265 / OCM 4 / BT).